The chain runs to 348 residues: MTTPLLGQSAEELRIWVESQGQPAYRAQQLHRWLYQRGVRSLMEITDWPKAWREQVHSVPVGRSQVVRQSAAADGTIKYLLAGADGETVETVGIPAAERLTVCVSSQVGCPMACRFCATGQSGFARNLGVHEIVDQVLTVQEGFGRRVSHVVFMGMGEPLLNLGAVVQALRVLNGDIGIGQRQITVSTVGVPGQIRRLGTYKLQITLAVSLHAPNQDLRLKLIPTAQHYPIEELLEDCRDYVETTNRRVSFEYTLLAGINDEPHHARELAAILRGFQSHVNLIPYNPIEGVEYERPGEARVRAFERELVRHKIAASVRHTRGLEEAAACGQLRRRSLSGEAQSASTRA.

E90 functions as the Proton acceptor in the catalytic mechanism. One can recognise a Radical SAM core domain in the interval 96–324; it reads AAERLTVCVS…ASVRHTRGLE (229 aa). Cysteines 103 and 329 form a disulfide. 3 residues coordinate [4Fe-4S] cluster: C110, C114, and C117. S-adenosyl-L-methionine is bound by residues 157 to 158, S187, 210 to 212, and N286; these read GE and SLH. The S-methylcysteine intermediate role is filled by C329.

This sequence belongs to the radical SAM superfamily. RlmN family. Requires [4Fe-4S] cluster as cofactor.

The protein localises to the cytoplasm. It catalyses the reaction adenosine(2503) in 23S rRNA + 2 reduced [2Fe-2S]-[ferredoxin] + 2 S-adenosyl-L-methionine = 2-methyladenosine(2503) in 23S rRNA + 5'-deoxyadenosine + L-methionine + 2 oxidized [2Fe-2S]-[ferredoxin] + S-adenosyl-L-homocysteine. It carries out the reaction adenosine(37) in tRNA + 2 reduced [2Fe-2S]-[ferredoxin] + 2 S-adenosyl-L-methionine = 2-methyladenosine(37) in tRNA + 5'-deoxyadenosine + L-methionine + 2 oxidized [2Fe-2S]-[ferredoxin] + S-adenosyl-L-homocysteine. Specifically methylates position 2 of adenine 2503 in 23S rRNA and position 2 of adenine 37 in tRNAs. The chain is Probable dual-specificity RNA methyltransferase RlmN from Gloeobacter violaceus (strain ATCC 29082 / PCC 7421).